We begin with the raw amino-acid sequence, 219 residues long: Small ribosomal subunit protein uS3c (219 aa).

The region spanning I39–K109 is the KH type-2 domain.

Belongs to the universal ribosomal protein uS3 family. In terms of assembly, part of the 30S ribosomal subunit.

Its subcellular location is the plastid. It is found in the cyanelle. In Cyanophora paradoxa, this protein is Small ribosomal subunit protein uS3c (rps3).